The following is a 206-amino-acid chain: Glycerol-3-phosphate acyltransferase 1 (206 aa).

Helical transmembrane passes span Ile-14–Leu-34, Ala-67–Leu-87, Ala-91–Phe-111, Leu-124–Phe-144, and Tyr-148–Gly-168.

The protein belongs to the PlsY family. As to quaternary structure, probably interacts with PlsX.

Its subcellular location is the cell inner membrane. The enzyme catalyses an acyl phosphate + sn-glycerol 3-phosphate = a 1-acyl-sn-glycero-3-phosphate + phosphate. Its pathway is lipid metabolism; phospholipid metabolism. Functionally, catalyzes the transfer of an acyl group from acyl-phosphate (acyl-PO(4)) to glycerol-3-phosphate (G3P) to form lysophosphatidic acid (LPA). This enzyme utilizes acyl-phosphate as fatty acyl donor, but not acyl-CoA or acyl-ACP. The chain is Glycerol-3-phosphate acyltransferase 1 from Rhizobium johnstonii (strain DSM 114642 / LMG 32736 / 3841) (Rhizobium leguminosarum bv. viciae).